Consider the following 148-residue polypeptide: Deoxyuridine 5'-triphosphate nucleotidohydrolase (148 aa).

Residues 68–70 (RSG), Asn-81, and 85–87 (TID) each bind substrate.

The protein belongs to the dUTPase family. The cofactor is Mg(2+).

It catalyses the reaction dUTP + H2O = dUMP + diphosphate + H(+). It participates in pyrimidine metabolism; dUMP biosynthesis; dUMP from dCTP (dUTP route): step 2/2. In terms of biological role, this enzyme is involved in nucleotide metabolism: it produces dUMP, the immediate precursor of thymidine nucleotides and it decreases the intracellular concentration of dUTP so that uracil cannot be incorporated into DNA. The chain is Deoxyuridine 5'-triphosphate nucleotidohydrolase from Geobacter metallireducens (strain ATCC 53774 / DSM 7210 / GS-15).